The following is a 139-amino-acid chain: D-ribose pyranase (139 aa).

Histidine 20 serves as the catalytic Proton donor. Substrate-binding positions include aspartate 28, histidine 106, and 128–130 (YAN).

Belongs to the RbsD / FucU family. RbsD subfamily. In terms of assembly, homodecamer.

The protein resides in the cytoplasm. It catalyses the reaction beta-D-ribopyranose = beta-D-ribofuranose. It participates in carbohydrate metabolism; D-ribose degradation; D-ribose 5-phosphate from beta-D-ribopyranose: step 1/2. Its function is as follows. Catalyzes the interconversion of beta-pyran and beta-furan forms of D-ribose. The polypeptide is D-ribose pyranase (Glaesserella parasuis serovar 5 (strain SH0165) (Haemophilus parasuis)).